Here is a 467-residue protein sequence, read N- to C-terminus: Ribulose bisphosphate carboxylase large chain (467 aa).

Position 6 is an N6,N6,N6-trimethyllysine (Lys-6). Positions 115 and 165 each coordinate substrate. The active-site Proton acceptor is the Lys-167. Position 169 (Lys-169) interacts with substrate. Residues Lys-193, Asp-195, and Glu-196 each contribute to the Mg(2+) site. Position 193 is an N6-carboxylysine (Lys-193). The active-site Proton acceptor is the His-286. 3 residues coordinate substrate: Arg-287, His-319, and Ser-371.

The protein belongs to the RuBisCO large chain family. Type I subfamily. In terms of assembly, heterohexadecamer of 8 large chains and 8 small chains; disulfide-linked. The disulfide link is formed within the large subunit homodimers. Mg(2+) serves as cofactor. Post-translationally, the disulfide bond which can form in the large chain dimeric partners within the hexadecamer appears to be associated with oxidative stress and protein turnover.

Its subcellular location is the plastid. It is found in the chloroplast. It carries out the reaction 2 (2R)-3-phosphoglycerate + 2 H(+) = D-ribulose 1,5-bisphosphate + CO2 + H2O. It catalyses the reaction D-ribulose 1,5-bisphosphate + O2 = 2-phosphoglycolate + (2R)-3-phosphoglycerate + 2 H(+). In terms of biological role, ruBisCO catalyzes two reactions: the carboxylation of D-ribulose 1,5-bisphosphate, the primary event in carbon dioxide fixation, as well as the oxidative fragmentation of the pentose substrate in the photorespiration process. Both reactions occur simultaneously and in competition at the same active site. This Cedrus atlantica (Atlas cedar) protein is Ribulose bisphosphate carboxylase large chain.